The chain runs to 137 residues: Large ribosomal subunit protein uL16 (137 aa).

This sequence belongs to the universal ribosomal protein uL16 family. As to quaternary structure, part of the 50S ribosomal subunit.

Binds 23S rRNA and is also seen to make contacts with the A and possibly P site tRNAs. The sequence is that of Large ribosomal subunit protein uL16 from Anaplasma phagocytophilum (strain HZ).